Consider the following 173-residue polypeptide: C-phycocyanin beta subunit (173 aa).

Asparagine 73 bears the N4-methylasparagine mark. Cysteine 83 and cysteine 154 together coordinate (2R,3E)-phycocyanobilin.

This sequence belongs to the phycobiliprotein family. As to quaternary structure, heterodimer of an alpha and a beta subunit. Heterodimers further assemble into trimers and the trimers into hexamers. Post-translationally, contains two covalently linked bilin chromophores.

It is found in the cellular thylakoid membrane. Its function is as follows. Light-harvesting photosynthetic bile pigment-protein from the phycobiliprotein complex (phycobilisome, PBS). Phycocyanin is the major phycobiliprotein in the PBS rod. The chain is C-phycocyanin beta subunit (cpcB) from Mastigocladus laminosus (Fischerella sp.).